A 457-amino-acid polypeptide reads, in one-letter code: Succinate-semialdehyde dehydrogenase [NADP(+)] (457 aa).

NADP(+) is bound by residues 133–134 (WN), 157–160 (KHAS), and 209–210 (GS). Glu231 functions as the Proton acceptor in the catalytic mechanism. Residue Leu232 coordinates NADP(+). The Nucleophile role is filled by Cys265. Glu362 contacts NADP(+).

This sequence belongs to the aldehyde dehydrogenase family.

It catalyses the reaction succinate semialdehyde + NADP(+) + H2O = succinate + NADPH + 2 H(+). Functionally, catalyzes the NADP(+)-dependent oxidation of succinate semialdehyde to succinate. It is believed to be the main source of succinate semialdehyde dehydrogenase activity in Mycobacterium. This Mycobacterium leprae (strain TN) protein is Succinate-semialdehyde dehydrogenase [NADP(+)] (gabD1).